Consider the following 469-residue polypeptide: Cytosolic beta-glucosidase (469 aa).

Glutamine 17, histidine 120, and asparagine 164 together coordinate substrate. The Proton donor role is filled by glutamate 165. Tyrosine 309 serves as a coordination point for substrate. Glutamate 373 acts as the Nucleophile in catalysis. Substrate contacts are provided by residues tryptophan 417 and 424–425; that span reads EW.

This sequence belongs to the glycosyl hydrolase 1 family. Klotho subfamily. May interact with NEU2. In terms of processing, the N-terminus is blocked. Present in small intestine (at protein level). Expressed in liver, small intestine, colon, spleen and kidney. Down-regulated in renal cell carcinomas and hepatocellular carcinomas.

Its subcellular location is the cytoplasm. The protein localises to the cytosol. The enzyme catalyses Hydrolysis of terminal, non-reducing beta-D-glucosyl residues with release of beta-D-glucose.. The catalysed reaction is a beta-D-glucosyl-(1&lt;-&gt;1')-N-acylsphing-4-enine + H2O = an N-acylsphing-4-enine + D-glucose. It catalyses the reaction a beta-D-galactosyl-(1&lt;-&gt;1')-N-acylsphing-4-enine + H2O = an N-acylsphing-4-enine + D-galactose. It carries out the reaction beta-D-glucosyl-(1&lt;-&gt;1)-sphing-4-enine + H2O = sphing-4-enine + D-glucose. The enzyme catalyses beta-D-glucosyl-(1&lt;-&gt;1)-N-octadecanoylsphing-4-enine + H2O = N-octadecanoylsphing-4-enine + D-glucose. The catalysed reaction is beta-D-galactosyl-(1&lt;-&gt;1)-sphing-4-enine + H2O = sphing-4-enine + D-galactose. It catalyses the reaction beta-D-galactosyl-(1&lt;-&gt;1')-N-octadecanoylsphing-4-enine + H2O = N-octadecanoylsphing-4-enine + D-galactose. It carries out the reaction a beta-D-xylosyl-(1&lt;-&gt;1')-N-acylsphing-4-enine + cholesterol = cholesteryl 3-beta-D-xyloside + an N-acylsphing-4-enine. Inhibited by 2,4-dinitrophenyl-2-fluoro-2-deoxy-beta-D-glucopyranoside. Inhibited by sodium taurocholate. Inhibited by alpha-1-C-nonyl-DIX/AnDIX. The glucosylceramidase activity is slightly inhibited by conduritol B epoxide/CBE while the galactosylceramidase activity is not. Neutral cytosolic beta-glycosidase with a broad substrate specificity that could play a role in the catabolism of glycosylceramides. Has a significant glucosylceramidase activity in vitro. However, that activity is relatively low and its significance in vivo is not clear. Hydrolyzes galactosylceramides/GalCers, glucosylsphingosines/GlcSphs and galactosylsphingosines/GalSphs. However, the in vivo relevance of these activities is unclear. It can also hydrolyze a broad variety of dietary glycosides including phytoestrogens, flavonols, flavones, flavanones and cyanogens in vitro and could therefore play a role in the metabolism of xenobiotics. Possesses transxylosylase activity in vitro using xylosylated ceramides/XylCers (such as beta-D-xylosyl-(1&lt;-&gt;1')-N-acylsphing-4-enine) as xylosyl donors and cholesterol as acceptor. Could also play a role in the catabolism of cytosolic sialyl free N-glycans. The sequence is that of Cytosolic beta-glucosidase from Homo sapiens (Human).